Consider the following 389-residue polypeptide: Cellobiose 2-epimerase (389 aa).

It belongs to the cellobiose 2-epimerase family.

The catalysed reaction is D-cellobiose = beta-D-glucosyl-(1-&gt;4)-D-mannopyranose. Its function is as follows. Catalyzes the reversible epimerization of cellobiose to 4-O-beta-D-glucopyranosyl-D-mannose (Glc-Man). This Ruminococcus albus (strain ATCC 27210 / DSM 20455 / JCM 14654 / NCDO 2250 / 7) protein is Cellobiose 2-epimerase.